The primary structure comprises 346 residues: Protein FAF1 (346 aa).

Disordered stretches follow at residues 22 to 120 (QFGS…LRSG) and 323 to 346 (KRDIARISGGERSGKFNGKKKSRR). A compositionally biased stretch (basic and acidic residues) spans 31–65 (FEDKTKNIRTEVDTRDSSGDEIDNSDHGSDFKDGT). Residues 72–85 (SDEDSGNETAEENN) are compositionally biased toward acidic residues.

In terms of assembly, interacts with KRR1.

The protein resides in the nucleus. It localises to the nucleolus. Its function is as follows. Required for pre-rRNA processing and 40S ribosomal subunit assembly. Seems to act in the processing of 35S rRNA at the A(0), A(1), and A(2) cleavage sites. In Saccharomyces cerevisiae (strain ATCC 204508 / S288c) (Baker's yeast), this protein is Protein FAF1 (FAF1).